The following is a 291-amino-acid chain: Geranyl diphosphate 2-C-methyltransferase (291 aa).

The protein belongs to the geranyl diphosphate 2-C-methyltransferase family. Mg(2+) serves as cofactor.

The enzyme catalyses (2E)-geranyl diphosphate + S-adenosyl-L-methionine = (E)-2-methylgeranyl diphosphate + S-adenosyl-L-homocysteine + H(+). Functionally, catalyzes the SAM-dependent methylation of geranyl diphosphate (GPP) to yield (E)-2-methylgeranyl diphosphate (2-MeGPP). This Streptomyces ambofaciens (strain ATCC 23877 / 3486 / DSM 40053 / JCM 4204 / NBRC 12836 / NRRL B-2516) protein is Geranyl diphosphate 2-C-methyltransferase.